We begin with the raw amino-acid sequence, 204 residues long: Urease accessory protein UreG (204 aa).

13–20 serves as a coordination point for GTP; that stretch reads GPVGSGKT.

Belongs to the SIMIBI class G3E GTPase family. UreG subfamily. Homodimer. UreD, UreF and UreG form a complex that acts as a GTP-hydrolysis-dependent molecular chaperone, activating the urease apoprotein by helping to assemble the nickel containing metallocenter of UreC. The UreE protein probably delivers the nickel.

The protein localises to the cytoplasm. Functionally, facilitates the functional incorporation of the urease nickel metallocenter. This process requires GTP hydrolysis, probably effectuated by UreG. This is Urease accessory protein UreG from Acinetobacter baumannii (strain AB307-0294).